We begin with the raw amino-acid sequence, 202 residues long: Small ribosomal subunit protein uS4 (202 aa).

The region spanning 91-157 (CRLDNVVYRA…TPFIVARETH (67 aa)) is the S4 RNA-binding domain.

Belongs to the universal ribosomal protein uS4 family. In terms of assembly, part of the 30S ribosomal subunit. Contacts protein S5. The interaction surface between S4 and S5 is involved in control of translational fidelity.

Functionally, one of the primary rRNA binding proteins, it binds directly to 16S rRNA where it nucleates assembly of the body of the 30S subunit. With S5 and S12 plays an important role in translational accuracy. This chain is Small ribosomal subunit protein uS4, found in Nocardioides sp. (strain ATCC BAA-499 / JS614).